A 249-amino-acid polypeptide reads, in one-letter code: Triosephosphate isomerase (249 aa).

9–11 is a substrate binding site; that stretch reads NWK. Residue His-94 is the Electrophile of the active site. The active-site Proton acceptor is Glu-166. Residues Gly-172, Ser-211, and 232–233 contribute to the substrate site; that span reads GG.

Belongs to the triosephosphate isomerase family. As to quaternary structure, homodimer.

Its subcellular location is the cytoplasm. The catalysed reaction is D-glyceraldehyde 3-phosphate = dihydroxyacetone phosphate. The protein operates within carbohydrate biosynthesis; gluconeogenesis. Its pathway is carbohydrate degradation; glycolysis; D-glyceraldehyde 3-phosphate from glycerone phosphate: step 1/1. Its function is as follows. Involved in the gluconeogenesis. Catalyzes stereospecifically the conversion of dihydroxyacetone phosphate (DHAP) to D-glyceraldehyde-3-phosphate (G3P). The sequence is that of Triosephosphate isomerase from Moorella thermoacetica (strain ATCC 39073 / JCM 9320).